The chain runs to 221 residues: Leucyl/phenylalanyl-tRNA--protein transferase (221 aa).

The protein belongs to the L/F-transferase family.

The protein resides in the cytoplasm. The catalysed reaction is N-terminal L-lysyl-[protein] + L-leucyl-tRNA(Leu) = N-terminal L-leucyl-L-lysyl-[protein] + tRNA(Leu) + H(+). It catalyses the reaction N-terminal L-arginyl-[protein] + L-leucyl-tRNA(Leu) = N-terminal L-leucyl-L-arginyl-[protein] + tRNA(Leu) + H(+). The enzyme catalyses L-phenylalanyl-tRNA(Phe) + an N-terminal L-alpha-aminoacyl-[protein] = an N-terminal L-phenylalanyl-L-alpha-aminoacyl-[protein] + tRNA(Phe). Functionally, functions in the N-end rule pathway of protein degradation where it conjugates Leu, Phe and, less efficiently, Met from aminoacyl-tRNAs to the N-termini of proteins containing an N-terminal arginine or lysine. In Phenylobacterium zucineum (strain HLK1), this protein is Leucyl/phenylalanyl-tRNA--protein transferase.